The sequence spans 466 residues: Asparagine--tRNA ligase (466 aa).

The protein belongs to the class-II aminoacyl-tRNA synthetase family. In terms of assembly, homodimer.

It is found in the cytoplasm. The catalysed reaction is tRNA(Asn) + L-asparagine + ATP = L-asparaginyl-tRNA(Asn) + AMP + diphosphate + H(+). This is Asparagine--tRNA ligase from Aeromonas hydrophila subsp. hydrophila (strain ATCC 7966 / DSM 30187 / BCRC 13018 / CCUG 14551 / JCM 1027 / KCTC 2358 / NCIMB 9240 / NCTC 8049).